Consider the following 202-residue polypeptide: Inner membrane-spanning protein YciB (202 aa).

Helical transmembrane passes span 3-23 (FFLD…AGAA), 46-66 (ILIA…IVWL), 74-94 (MLWV…VFHN), 100-120 (WKPT…ALLF), 145-165 (LAWI…AYGY), and 173-193 (FKLF…GFYL).

Belongs to the YciB family.

The protein localises to the cell inner membrane. In terms of biological role, plays a role in cell envelope biogenesis, maintenance of cell envelope integrity and membrane homeostasis. This chain is Inner membrane-spanning protein YciB, found in Azoarcus sp. (strain BH72).